The primary structure comprises 932 residues: Serotype-specific antigen 1 (932 aa).

The signal sequence occupies residues methionine 1 to alanine 24. Residues tyrosine 25–valine 407 enclose the Peptidase S8 domain. Residues aspartate 58, histidine 116, and serine 351 each act as charge relay system in the active site. The 264-residue stretch at histidine 669 to leucine 932 folds into the Autotransporter domain.

It belongs to the peptidase S8 family.

Its subcellular location is the cell outer membrane. This chain is Serotype-specific antigen 1 (ssa1), found in Mannheimia haemolytica (Pasteurella haemolytica).